A 431-amino-acid polypeptide reads, in one-letter code: tRNA-specific 2-thiouridylase MnmA (431 aa).

ATP contacts are provided by residues 35 to 42 and leucine 61; that span reads AMSGGVDS. Catalysis depends on cysteine 129, which acts as the Nucleophile. A disulfide bridge connects residues cysteine 129 and cysteine 226. An ATP-binding site is contributed by glycine 153. Positions 176 to 178 are interaction with tRNA; sequence RDQ. Cysteine 226 functions as the Cysteine persulfide intermediate in the catalytic mechanism. Residues 407–431 form a disordered region; it reads PKPPNEDLLDTNESSDLVSPKRSAC.

The protein belongs to the MnmA/TRMU family.

The protein localises to the cytoplasm. The catalysed reaction is S-sulfanyl-L-cysteinyl-[protein] + uridine(34) in tRNA + AH2 + ATP = 2-thiouridine(34) in tRNA + L-cysteinyl-[protein] + A + AMP + diphosphate + H(+). Catalyzes the 2-thiolation of uridine at the wobble position (U34) of tRNA, leading to the formation of s(2)U34. The sequence is that of tRNA-specific 2-thiouridylase MnmA from Beijerinckia indica subsp. indica (strain ATCC 9039 / DSM 1715 / NCIMB 8712).